Consider the following 187-residue polypeptide: uncharacterized protein (187 aa).

Residues 127–172 adopt a coiled-coil conformation; sequence KQPQVTLTQLQEELDEAKTRLALKEKELLEALSEISKLRLQLSNQL.

This is an uncharacterized protein from Tomato torrado virus (isolate Solanum lycopersicum/Spain/PRIToTV0301/-) (ToTV).